We begin with the raw amino-acid sequence, 89 residues long: MVPEAPAPFEEPLPPEATDQWQDRALCAQTDPEAFFPEKGGSTREAKKICMGCEVRHECLEYALAHDERFGIWGGLSERERRRLKRGII.

Over residues M1 to P15 the composition is skewed to pro residues. The tract at residues M1–R24 is disordered. The 58-residue stretch at L26–R83 folds into the 4Fe-4S Wbl-type domain. Position 27 (C27) interacts with [4Fe-4S] cluster. Phosphoserine is present on S42. 3 residues coordinate [4Fe-4S] cluster: C50, C53, and C59.

The protein belongs to the WhiB family. Requires [4Fe-4S] cluster as cofactor. May be phosphorylated, possibly on Ser-42. Post-translationally, the cluster is degraded quickly in the presence of air. Upon cluster removal intramolecular disulfide bonds are formed. In terms of processing, the Fe-S cluster can be nitrosylated by nitric oxide (NO).

It is found in the cytoplasm. Functionally, acts as a transcriptional regulator. Probably redox-responsive. The apo- but not holo-form probably binds DNA. The apo-form functions as a chaperone, preventing aggregation or helping in correct refolding of a number of substrates; this activity does not require ATP or the ability to bind a Fe-S cluster. Chaperone activity is insensitive to the redox state of its cysteine residues. The apo-form has no protein disulfide reductase activity. The apo-form binds to its own promoter. This chain is Transcriptional regulator WhiB2 (whiB2), found in Mycobacterium tuberculosis (strain ATCC 25618 / H37Rv).